Reading from the N-terminus, the 304-residue chain is MPINVPSGLPAVKVLAKEGIFVMTEKRAIHQDIRPLEILILNLMPDKIKTEIQLLRLLGNTPLQVNVTLLYTETHKPKHTPIEHILKFYTTFSAVKDRKFDGFIITGAPVELLPFEEVDYWEELTEIMEWSRHNVYSTMFICWAAQAGLYYFYGIPKYELPQKLSGVYKHRVAKDSVLFRGHDDFFWAPHSRYTEVKKEDIDKVPELEILAESDEAGVYVVANKSERQIFVTGHPEYDRYTLRDEYYRDIGRNLKVPIPANYFPNDDPTKTPILTWWSHAHLFFSNWLNYCIYQKTPYRLEDIH.

Cys-142 serves as the catalytic Acyl-thioester intermediate. Residues Lys-163 and Ser-191 each coordinate substrate. The active-site Proton acceptor is His-234. Residue Glu-236 is part of the active site. Substrate is bound at residue Arg-248.

It belongs to the MetA family.

The protein localises to the cytoplasm. The enzyme catalyses L-homoserine + acetyl-CoA = O-acetyl-L-homoserine + CoA. The protein operates within amino-acid biosynthesis; L-methionine biosynthesis via de novo pathway; O-acetyl-L-homoserine from L-homoserine: step 1/1. Functionally, transfers an acetyl group from acetyl-CoA to L-homoserine, forming acetyl-L-homoserine. The sequence is that of Homoserine O-acetyltransferase from Thermotoga petrophila (strain ATCC BAA-488 / DSM 13995 / JCM 10881 / RKU-1).